Consider the following 432-residue polypeptide: MGSPSSSMTEGDVECFSEYMELWIHRLRIEGLRLWLSGILRIQVGLVSMENLNHQLSSCGFALHRDLDKNYVFRVMYSGCFVQLEHGNYVIVLNLLKRVSRFGGRTQKFMMKCPAVLAPPNREYIQCDSDSIQVTREIPVDNWNNELDWSLALRGSLVVALEDSSLIQINVEMHKPNITVQGRRDTILSPVQVFASEGHFLPLKLVSGNYAYSMEATCPNGNTSSSNETVLHIYKRRMGLTKRGGYQNETLSVSSVMVEQTDTFSWTETTDFVQLIIPTSYIQQNKECLSQTGEKLQQNFYKIDAVLTFKETNHKMHWTMENTSPCSELLKSHSVYDDPQKANFTTHSPTWTAERPEIPADYTTNLTPSVSPSTTSTALQTADPDTGTTSMPTPQLKTTEVFNTSTPLSSQEVFSSTLYSPNHNSTSSSVHQ.

In terms of tissue distribution, expressed specifically by cells of the ciliated left-right organizer.

This chain is Ciliated left-right organizer protein containing ZP-N domains homolog (ciroz), found in Danio rerio (Zebrafish).